We begin with the raw amino-acid sequence, 347 residues long: 4-hydroxy-2-oxovalerate aldolase (347 aa).

One can recognise a Pyruvate carboxyltransferase domain in the interval 2–252 (ILISDATLRD…DTRTTFERVM (251 aa)). 10–11 (RD) lines the substrate pocket. Position 11 (Asp11) interacts with Mn(2+). Residue His14 is the Proton acceptor of the active site. Residues Ser164 and His191 each coordinate substrate. His191 and His193 together coordinate Mn(2+).

It belongs to the 4-hydroxy-2-oxovalerate aldolase family.

It catalyses the reaction (S)-4-hydroxy-2-oxopentanoate = acetaldehyde + pyruvate. This chain is 4-hydroxy-2-oxovalerate aldolase, found in Burkholderia pseudomallei (strain 1106a).